The following is a 291-amino-acid chain: MEMO1 family protein PYRAB05390 (291 aa).

It belongs to the MEMO1 family.

This is MEMO1 family protein PYRAB05390 from Pyrococcus abyssi (strain GE5 / Orsay).